Consider the following 516-residue polypeptide: Protein indeterminate-domain 4, chloroplastic (516 aa).

Over residues 1–26 (MSSSSYNTSVIPSSSSSAQPFFITSS) the composition is skewed to low complexity. Residues 1–68 (MSSSSYNTSV…QPGNPNPDAE (68 aa)) are disordered. The transit peptide at 1–70 (MSSSSYNTSV…GNPNPDAEVV (70 aa)) directs the protein to the chloroplast. At Ser-73 the chain carries Phosphoserine. 2 consecutive C2H2-type zinc fingers follow at residues 83–105 (FICD…RRGH) and 124–154 (YLCP…YRKH). The short motif at 146-153 (IKKHYYRK) is the Nuclear localization signal element. The segment at 159-182 (WKCEKCSKRYAVQSDWKAHSKTCG) adopts a C2H2-type 2; degenerate zinc-finger fold. Zn(2+) contacts are provided by Cys-161, Cys-164, His-177, Cys-181, Cys-188, Cys-190, His-203, and Cys-207. A CCHC-type 2; atypical zinc finger spans residues 186 to 209 (YRCDCGTIFSRRDSYITHRAFCDA). The segment at 196-208 (RRDSYITHRAFCD) is SHR-binding. The segment at 483 to 516 (NRGGGGGGRGSARGGVSLDGEAKFPEQNYPFGRG) is disordered. Residues 484-495 (RGGGGGGRGSAR) are compositionally biased toward gly residues.

In terms of assembly, binds to RGA and SCL3 competitively in the nucleus.

Its subcellular location is the plastid. The protein resides in the chloroplast. It localises to the nucleus. Its function is as follows. Transcription factor that may act a transcriptional activator of nuclear-encoded photosynthetic gene expression. Binds DNA via its zinc fingers. Recognizes and binds to SCL3 promoter sequence 5'-AGACAA-3' to promote its expression when in complex with RGA. This chain is Protein indeterminate-domain 4, chloroplastic, found in Arabidopsis thaliana (Mouse-ear cress).